We begin with the raw amino-acid sequence, 503 residues long: MEEFQGYLELDRSQQHDFLYPLIFREYIYALAHDHGLNRSILLDNVGYDNKSSFLIIKRLISRMYQQNHLIISPNDSNQKKIGGYNKNLYCQMISEGFAVIVEIPFSLRLVSSLEGTEIVKSYNLRSIHSIFPFLEDKFSHLNYVSDVLIPYPIHLEILVQTLRYWAKDPSYLHLLRLFLHDYYNLNSLITKNKSIFSKSNPRLFLLLYNSYVCEYESILLFLRNQSSHLQFTSSWIFFERIHFYEKIKYPVEEVFANDFPAILWFFKDPFMHYVRYQGKSILASKDTPLLMNKWKYYLVNLWQCHFYVWSQPGRIYINQLSKHSLDFLGYLSSIRPNLSVVRSQMLENSFIMDNARKKFDTLVPIIPLIGSLAKVKFCNALGHPISKSTWADSSDFDIIDRFVRICRNLSHYYSGSSKKKSLYQIKYILRLSCVKTLARKHKSTVRTFLKRLGSKLLEEFFTEEEQILSLIFPRASSTLTRFYRGRIWYLDIFCINDLVNHE.

It belongs to the intron maturase 2 family. MatK subfamily.

It is found in the plastid. The protein localises to the chloroplast. Usually encoded in the trnK tRNA gene intron. Probably assists in splicing its own and other chloroplast group II introns. The polypeptide is Maturase K (Cercocarpus betuloides (Mountain mahogany)).